Reading from the N-terminus, the 131-residue chain is Translation initiation factor 5A (131 aa).

Hypusine is present on K37.

This sequence belongs to the eIF-5A family.

The protein localises to the cytoplasm. In terms of biological role, functions by promoting the formation of the first peptide bond. The polypeptide is Translation initiation factor 5A (eIF5A) (Methanococcus vannielii (strain ATCC 35089 / DSM 1224 / JCM 13029 / OCM 148 / SB)).